Consider the following 72-residue polypeptide: Aurein-2.3 (72 aa).

The signal sequence occupies residues 1–22; it reads MAFLKKSLFLVLFLGLVSLSIC. The propeptide occupies 23–49; that stretch reads EKEKRQNGEDEDENEAANHEEGSEEKR. The disordered stretch occupies residues 27 to 47; sequence RQNGEDEDENEAANHEEGSEE. Residues 38–47 show a composition bias toward basic and acidic residues; the sequence is AANHEEGSEE. Leu-65 is subject to Leucine amide. Positions 69–72 are excised as a propeptide; sequence NDVE.

In terms of processing, amidation is essential for antibacterial activity against Gram-positive bacteria. As to expression, expressed by the skin dorsal glands.

It is found in the secreted. Its subcellular location is the target cell membrane. In terms of biological role, amphipathic alpha-helical antimicrobial peptide with weak to moderate activity against Gram-positive bacteria, and no activity against Gram-negative bacteria. Probably acts by disturbing membrane functions with its amphipathic structure. Strongly inhibits the formation of NO by neuronal nitric oxide synthase (nNOS) at micromolar concentrations. Acts by a non-competitive mechanism, probably by binding to calcium/calmodulin and as a consequence blocking calmodulin attachment to nNOS. This chain is Aurein-2.3, found in Ranoidea aurea (Green and golden bell frog).